The chain runs to 1186 residues: Myelin transcription factor 1-like protein (1186 aa).

A disordered region spans residues 1 to 21 (MEVDTEEKRHRTRSKGVRVPV). The CCHHC-type 1 zinc finger occupies 22-65 (EPAIQELFSCPTPGCDGSGHVSGKYARHRSVYGCPLAKKRKTQD). The Zn(2+) site is built by Cys-31, Cys-36, His-49, and Cys-55. 2 disordered regions span residues 56-175 (PLAK…QMNC) and 220-247 (RTES…GRKS). Over residues 86-169 (SVDECDDSDG…EEEEEEEENE (84 aa)) the composition is skewed to acidic residues. Position 250 is a phosphoserine (Ser-250). Disordered regions lie at residues 342 to 372 (SETN…GRTP) and 449 to 513 (REKM…GCDG). A compositionally biased stretch (polar residues) spans 343–357 (ETNPQERNPQQNMNI). Composition is skewed to basic and acidic residues over residues 361 to 372 (VRPEEDFPGRTP), 449 to 487 (REKM…DSHV), and 495 to 505 (DPSRTEKKESK). CCHHC-type zinc fingers lie at residues 497 to 540 (SRTE…PPEI) and 541 to 584 (LAMH…KLAK). Zn(2+) is bound by residues Cys-506, Cys-511, His-524, Cys-530, Cys-550, Cys-555, His-568, and Cys-574. 2 disordered regions span residues 659 to 709 (RAIA…GGGS) and 753 to 780 (KPQD…MNKQ). The segment covering 666–683 (QTRDISPKGYDDAKRYCK) has biased composition (basic and acidic residues). The segment covering 685-709 (PSPSSSSTSSYAPSSSSNLSCGGGS) has biased composition (low complexity). 3 consecutive CCHHC-type zinc fingers follow at residues 896–939 (LATS…GIRI), 945–988 (DKED…QKDG), and 998–1041 (KSVK…MKKA). Positions 905, 910, 923, 929, 954, 959, 972, 978, 1007, 1012, 1025, and 1031 each coordinate Zn(2+). Positions 1056–1130 (SNGIENDEEI…LANLSQSLIH (75 aa)) form a coiled coil.

It belongs to the MYT1 family. As to quaternary structure, interacts with SIN3B.

Its subcellular location is the nucleus. The protein localises to the chromosome. Functionally, transcription factor that plays a key role in neuronal differentiation by specifically repressing expression of non-neuronal genes during neuron differentiation. In contrast to other transcription repressors that inhibit specific lineages, mediates repression of multiple differentiation programs. Also represses expression of negative regulators of neurogenesis, such as members of the Notch signaling pathway, including HES1. The combination of three transcription factors, ASCL1, POU3F2/BRN2 and MYT1L, is sufficient to reprogram fibroblasts and other somatic cells into induced neuronal (iN) cells in vitro. Directly binds the 5'-AAGTT-3' core motif present on the promoter of target genes and represses transcription by recruiting a multiprotein complex containing SIN3B. The 5'-AAGTT-3' core motif is absent from the promoter of neural genes. The polypeptide is Myelin transcription factor 1-like protein (Homo sapiens (Human)).